A 225-amino-acid polypeptide reads, in one-letter code: Cytidylate kinase (225 aa).

Position 11 to 19 (11 to 19) interacts with ATP; that stretch reads GPAGAGKST.

The protein belongs to the cytidylate kinase family. Type 1 subfamily.

It localises to the cytoplasm. The catalysed reaction is CMP + ATP = CDP + ADP. The enzyme catalyses dCMP + ATP = dCDP + ADP. In Shouchella clausii (strain KSM-K16) (Alkalihalobacillus clausii), this protein is Cytidylate kinase.